The primary structure comprises 88 residues: UPF0298 protein BcerKBAB4_3759 (88 aa).

Belongs to the UPF0298 family.

It is found in the cytoplasm. This is UPF0298 protein BcerKBAB4_3759 from Bacillus mycoides (strain KBAB4) (Bacillus weihenstephanensis).